The primary structure comprises 222 residues: Probable translocation protein y4yL (222 aa).

The next 4 membrane-spanning stretches (helical) occupy residues 6–26 (PAIL…LAVV), 52–72 (PNIV…APVA), 158–178 (IGFL…TILM), and 182–202 (MSMV…FVAI).

It belongs to the FliP/MopC/SpaP family.

Its subcellular location is the cell membrane. Its function is as follows. Could be involved in the secretion of an unknown factor. The protein is Probable translocation protein y4yL of Sinorhizobium fredii (strain NBRC 101917 / NGR234).